The sequence spans 514 residues: Peptide chain release factor 3 (514 aa).

Residues 8–268 enclose the tr-type G domain; the sequence is KKRRTFAIIS…TFLKFAPEPH (261 aa). Residues 17–24, 85–89, and 139–142 each bind GTP; these read SHPDAGKT, DTPGH, and NKLD.

It belongs to the TRAFAC class translation factor GTPase superfamily. Classic translation factor GTPase family. PrfC subfamily.

Its subcellular location is the cytoplasm. Increases the formation of ribosomal termination complexes and stimulates activities of RF-1 and RF-2. It binds guanine nucleotides and has strong preference for UGA stop codons. It may interact directly with the ribosome. The stimulation of RF-1 and RF-2 is significantly reduced by GTP and GDP, but not by GMP. This chain is Peptide chain release factor 3, found in Streptococcus thermophilus (strain ATCC BAA-491 / LMD-9).